Here is a 180-residue protein sequence, read N- to C-terminus: Sec-independent protein translocase protein TatB (180 aa).

Residues 1–21 form a helical membrane-spanning segment; sequence MFDIGWSELLVIGVVALIAIG. Positions 95 to 180 are disordered; the sequence is IEGVDKPVES…AERLKDAKAS (86 aa). Residues 103 to 123 show a composition bias toward low complexity; that stretch reads ESQPAASAAPETSATVEAPAT. Residues 170–180 are compositionally biased toward basic and acidic residues; sequence EAERLKDAKAS.

It belongs to the TatB family. The Tat system comprises two distinct complexes: a TatABC complex, containing multiple copies of TatA, TatB and TatC subunits, and a separate TatA complex, containing only TatA subunits. Substrates initially bind to the TatABC complex, which probably triggers association of the separate TatA complex to form the active translocon.

Its subcellular location is the cell inner membrane. In terms of biological role, part of the twin-arginine translocation (Tat) system that transports large folded proteins containing a characteristic twin-arginine motif in their signal peptide across membranes. Together with TatC, TatB is part of a receptor directly interacting with Tat signal peptides. TatB may form an oligomeric binding site that transiently accommodates folded Tat precursor proteins before their translocation. The polypeptide is Sec-independent protein translocase protein TatB (Bradyrhizobium sp. (strain BTAi1 / ATCC BAA-1182)).